Consider the following 302-residue polypeptide: NmrA-like family domain-containing protein DDB_G0286605 (302 aa).

NADP(+) is bound by residues 9 to 14, 35 to 39, 56 to 57, 78 to 80, K130, and 157 to 160; these read GGTGYQ, RNPES, DE, TNS, and YFQN.

Belongs to the NmrA-type oxidoreductase family.

Its function is as follows. May be a redox sensor protein. This chain is NmrA-like family domain-containing protein DDB_G0286605, found in Dictyostelium discoideum (Social amoeba).